The primary structure comprises 861 residues: Origin recognition complex subunit 1 (861 aa).

The region spanning 45 to 171 (IHIQIGQFVL…EKKFRPLSSE (127 aa)) is the BAH domain. A disordered region spans residues 183–233 (AAKCQKPVRAKSKSAESPSWTPAEHVAKRIESRHSASKSRQTPTHPLTPRA). The residue at position 199 (Ser199) is a Phosphoserine. Thr203 is subject to Phosphothreonine. Positions 207 to 216 (HVAKRIESRH) are enriched in basic and acidic residues. Phosphoserine occurs at positions 252, 255, 273, and 287. The disordered stretch occupies residues 269-312 (SEITSPSKRSQPDKLQTLSPALKAPEKTRETGLSYTEDDKKASP). The span at 270–287 (EITSPSKRSQPDKLQTLS) shows a compositional bias: polar residues. Residue Lys326 is modified to N6-acetyllysine. Thr337 carries the post-translational modification Phosphothreonine. Position 340 is a phosphoserine (Ser340). Disordered stretches follow at residues 360 to 382 (KRDAKEAKAQNEATSTPHRIRRK) and 412 to 476 (PAAE…QIRS). Phosphoserine occurs at positions 417 and 420. Positions 440–456 (SRNLRSSLKSSLHTLTK) are enriched in low complexity. The segment covering 457 to 466 (VPKKSLKPRT) has biased composition (basic residues). A Phosphoserine modification is found at Ser478. Residues Val500 and 534–542 (GVPGTGKTA) each bind ATP. A necessary and sufficient for ORC complex assembly region spans residues 501–861 (PESLPCREQE…DDVLYALKDE (361 aa)). Mg(2+) contacts are provided by Asp620 and Glu621. ATP is bound by residues Glu621, Asn654, and Arg720.

Belongs to the ORC1 family. As to quaternary structure, component of ORC, a complex composed of at least 6 subunits: ORC1, ORC2, ORC3, ORC4, ORC5 and ORC6. ORC is regulated in a cell-cycle dependent manner. It is sequentially assembled at the exit from anaphase of mitosis and disassembled as cells enter S phase. Interacts with CDC6 and KAT7/HBO1. Interacts with LRWD1 predominantly during the G1 phase and with less affinity during mitosis, when phosphorylated. Post-translationally, phosphorylated during mitosis.

The protein resides in the nucleus. Its function is as follows. Component of the origin recognition complex (ORC) that binds origins of replication. DNA-binding is ATP-dependent. The DNA sequences that define origins of replication have not been identified yet. ORC is required to assemble the pre-replication complex necessary to initiate DNA replication. The sequence is that of Origin recognition complex subunit 1 (ORC1) from Homo sapiens (Human).